The primary structure comprises 219 residues: Pyridoxine/pyridoxamine 5'-phosphate oxidase (219 aa).

The tract at residues M1–L23 is disordered. Residues R66–K71, F81–T82, K88, and Q110 contribute to the FMN site. Position 71 (K71) interacts with substrate. Residues Y128, R132, and S136 each coordinate substrate. FMN contacts are provided by residues Q145–S146 and W191. R197–H199 provides a ligand contact to substrate. R201 contributes to the FMN binding site.

Belongs to the pyridoxamine 5'-phosphate oxidase family. Homodimer. Requires FMN as cofactor.

The enzyme catalyses pyridoxamine 5'-phosphate + O2 + H2O = pyridoxal 5'-phosphate + H2O2 + NH4(+). The catalysed reaction is pyridoxine 5'-phosphate + O2 = pyridoxal 5'-phosphate + H2O2. Its pathway is cofactor metabolism; pyridoxal 5'-phosphate salvage; pyridoxal 5'-phosphate from pyridoxamine 5'-phosphate: step 1/1. The protein operates within cofactor metabolism; pyridoxal 5'-phosphate salvage; pyridoxal 5'-phosphate from pyridoxine 5'-phosphate: step 1/1. Its function is as follows. Catalyzes the oxidation of either pyridoxine 5'-phosphate (PNP) or pyridoxamine 5'-phosphate (PMP) into pyridoxal 5'-phosphate (PLP). The protein is Pyridoxine/pyridoxamine 5'-phosphate oxidase of Hyphomonas neptunium (strain ATCC 15444).